The following is a 358-amino-acid chain: Probable dual-specificity RNA methyltransferase RlmN 1 (358 aa).

The Radical SAM core domain maps to 101–326 (MQAGGTLCIS…REKGFYTLLR (226 aa)). Cys108 and Cys337 are disulfide-bonded. Cys115, Cys119, and Cys122 together coordinate [4Fe-4S] cluster. S-adenosyl-L-methionine contacts are provided by residues 162–163 (GE), Ser194, 218–220 (SLN), and Asn294. Residue Cys337 is the S-methylcysteine intermediate of the active site.

The protein belongs to the radical SAM superfamily. RlmN family. [4Fe-4S] cluster is required as a cofactor.

It localises to the cytoplasm. The catalysed reaction is adenosine(2503) in 23S rRNA + 2 reduced [2Fe-2S]-[ferredoxin] + 2 S-adenosyl-L-methionine = 2-methyladenosine(2503) in 23S rRNA + 5'-deoxyadenosine + L-methionine + 2 oxidized [2Fe-2S]-[ferredoxin] + S-adenosyl-L-homocysteine. The enzyme catalyses adenosine(37) in tRNA + 2 reduced [2Fe-2S]-[ferredoxin] + 2 S-adenosyl-L-methionine = 2-methyladenosine(37) in tRNA + 5'-deoxyadenosine + L-methionine + 2 oxidized [2Fe-2S]-[ferredoxin] + S-adenosyl-L-homocysteine. Its function is as follows. Specifically methylates position 2 of adenine 2503 in 23S rRNA and position 2 of adenine 37 in tRNAs. The chain is Probable dual-specificity RNA methyltransferase RlmN 1 from Protochlamydia amoebophila (strain UWE25).